We begin with the raw amino-acid sequence, 64 residues long: Prokaryotic ubiquitin-like protein Pup (64 aa).

The disordered stretch occupies residues 1–37 (MAQEQTKRGGGGGDDDDIAGSTAAGQERREKLTEETD). Residues 21–58 (STAAGQERREKLTEETDDLLDEIDDVLEENAEDFVRAY) are ARC ATPase binding. Positions 23 to 52 (AAGQERREKLTEETDDLLDEIDDVLEENAE) form a coiled coil. Glutamine 64 carries the deamidated glutamine modification. An Isoglutamyl lysine isopeptide (Gln-Lys) (interchain with K-? in acceptor proteins) cross-link involves residue glutamine 64.

Belongs to the prokaryotic ubiquitin-like protein family. In terms of assembly, strongly interacts with the proteasome-associated ATPase ARC through a hydrophobic interface; the interacting region of Pup lies in its C-terminal half. There is one Pup binding site per ARC hexamer ring. Is modified by deamidation of its C-terminal glutamine to glutamate by the deamidase Dop, a prerequisite to the subsequent pupylation process.

Its pathway is protein degradation; proteasomal Pup-dependent pathway. Functionally, protein modifier that is covalently attached to lysine residues of substrate proteins, thereby targeting them for proteasomal degradation. The tagging system is termed pupylation. This chain is Prokaryotic ubiquitin-like protein Pup, found in Mycobacterium tuberculosis (strain ATCC 25177 / H37Ra).